The chain runs to 285 residues: Urease accessory protein UreD (285 aa).

The protein belongs to the UreD family. As to quaternary structure, ureD, UreF and UreG form a complex that acts as a GTP-hydrolysis-dependent molecular chaperone, activating the urease apoprotein by helping to assemble the nickel containing metallocenter of UreC. The UreE protein probably delivers the nickel.

The protein resides in the cytoplasm. Functionally, required for maturation of urease via the functional incorporation of the urease nickel metallocenter. This chain is Urease accessory protein UreD, found in Picosynechococcus sp. (strain ATCC 27264 / PCC 7002 / PR-6) (Agmenellum quadruplicatum).